Reading from the N-terminus, the 395-residue chain is NAD(P)H-quinone oxidoreductase subunit H, chloroplastic (395 aa).

The protein belongs to the complex I 49 kDa subunit family. NDH is composed of at least 16 different subunits, 5 of which are encoded in the nucleus.

It localises to the plastid. Its subcellular location is the chloroplast thylakoid membrane. It catalyses the reaction a plastoquinone + NADH + (n+1) H(+)(in) = a plastoquinol + NAD(+) + n H(+)(out). The catalysed reaction is a plastoquinone + NADPH + (n+1) H(+)(in) = a plastoquinol + NADP(+) + n H(+)(out). Functionally, NDH shuttles electrons from NAD(P)H:plastoquinone, via FMN and iron-sulfur (Fe-S) centers, to quinones in the photosynthetic chain and possibly in a chloroplast respiratory chain. The immediate electron acceptor for the enzyme in this species is believed to be plastoquinone. Couples the redox reaction to proton translocation, and thus conserves the redox energy in a proton gradient. This is NAD(P)H-quinone oxidoreductase subunit H, chloroplastic from Coffea arabica (Arabian coffee).